The primary structure comprises 161 residues: Phosphopantetheine adenylyltransferase (161 aa).

T10 lines the substrate pocket. ATP-binding positions include T10–F11 and H18. 3 residues coordinate substrate: K42, M74, and R88. ATP is bound by residues G89–R91, E99, and L124–S130.

The protein belongs to the bacterial CoaD family. As to quaternary structure, homohexamer. Mg(2+) is required as a cofactor.

The protein resides in the cytoplasm. It carries out the reaction (R)-4'-phosphopantetheine + ATP + H(+) = 3'-dephospho-CoA + diphosphate. It functions in the pathway cofactor biosynthesis; coenzyme A biosynthesis; CoA from (R)-pantothenate: step 4/5. Functionally, reversibly transfers an adenylyl group from ATP to 4'-phosphopantetheine, yielding dephospho-CoA (dPCoA) and pyrophosphate. This is Phosphopantetheine adenylyltransferase from Proteus mirabilis (strain HI4320).